We begin with the raw amino-acid sequence, 133 residues long: FPRL1 inhibitory protein (133 aa).

A signal peptide spans 1–28 (MKKNITKTIIASTVIAAGLLTQTNDAKA).

It belongs to the CHIPS/FLIPr family.

It localises to the secreted. In terms of biological role, may be involved in countering the first line of host defense mechanisms. Impairs the leukocyte response to FPRL1 agonists by binding directly to host FPRL1. In Staphylococcus aureus (strain Mu50 / ATCC 700699), this protein is FPRL1 inhibitory protein (flr).